Reading from the N-terminus, the 467-residue chain is Asparagine--tRNA ligase (467 aa).

It belongs to the class-II aminoacyl-tRNA synthetase family. In terms of assembly, homodimer.

It localises to the cytoplasm. It carries out the reaction tRNA(Asn) + L-asparagine + ATP = L-asparaginyl-tRNA(Asn) + AMP + diphosphate + H(+). The chain is Asparagine--tRNA ligase from Glaesserella parasuis serovar 5 (strain SH0165) (Haemophilus parasuis).